A 552-amino-acid chain; its full sequence is Putative transport protein HS_1470 (552 aa).

Helical transmembrane passes span 4 to 24 (IAIT…IGHW), 28 to 48 (GVGL…HFMN), 67 to 87 (LILF…ASLL), 95 to 115 (GLAT…YKVV), and 157 to 177 (MAYA…MWLI). 2 RCK C-terminal domains span residues 190–275 (KQFQ…VIGE) and 277–360 (IDMP…IIGN). 6 helical membrane passes run 370–390 (MLPV…PFYI), 402–424 (AGGP…LYWF), 438–458 (IVLF…DTLV), 463–483 (LEWM…TGII), 495–515 (LCGL…ANAI), and 529–549 (VYPL…ILLW).

Belongs to the AAE transporter (TC 2.A.81) family. YidE subfamily.

The protein resides in the cell membrane. The sequence is that of Putative transport protein HS_1470 from Histophilus somni (strain 129Pt) (Haemophilus somnus).